The primary structure comprises 1001 residues: Chloride channel protein clh-3 (1001 aa).

Residues 1–48 lie on the Cytoplasmic side of the membrane; the sequence is MGIGTKILSKIEKNKTSDGLTIPLTPTTQKQSSSWCSFESIKTFFRTV. A run of 2 helical transmembrane segments spans residues 49–85 and 91–117; these read IRDWIFLALLGFIMASLSFGMDYAILNLQNGQMRLFD and HFTLAYLVWVGYVVGLILLSAVCAHYI. Residues 123–127 carry the Selectivity filter part_1 motif; it reads GSGIP. Position 124 (Ser124) interacts with chloride. The segment at residues 126-133 is an intramembrane region (helical); that stretch reads IPEMKTIL. A run of 2 helical transmembrane segments spans residues 142 to 160 and 167 to 185; these read LSVRTLLSKMIGLTLSLGS and EGPFVHVASVVASQLTRLV. A Selectivity filter part_2 motif is present at residues 165–169; sequence GKEGP. 2 consecutive intramembrane regions (helical) follow at residues 202 to 214 and 218 to 226; these read MLAAGCAVGVACT and PIGGVLFSI. 5 helical membrane-spanning segments follow: residues 238 to 258, 285 to 313, 322 to 341, 405 to 425, and 433 to 456; these read YWRGFFAATCSATLFRILRMF, LPIFALIGLVCGLAGSIFVYLHRRTVLFL, IFQKYWLIYPIFIATFISSL, YSPFVTLSSFQVVYFFLAILA, and GIFMPVFVLGAAFGRLVGEGVFSL. The Selectivity filter part_3 signature appears at 433–437; that stretch reads GIFMP. Chloride is bound by residues Ile434 and Phe435. The segment at residues 473–487 is an intramembrane region (helical); sequence GVYAVVGAAAFCGAV. Positions 488–489 form an intramembrane region, note=Loop between two helices; the sequence is TH. The helical intramembrane region spans 490 to 501; it reads TVSVAVIVFELT. The segment at residues 502–506 is an intramembrane region (note=Loop between two helices); sequence GQLCH. The helical transmembrane segment at 507–524 threads the bilayer; sequence LLPVMIAVLIANAVASYL. Residues 525–1001 are Cytoplasmic-facing; the sequence is QPSIYDSIIR…LPDDVHDEKF (477 aa). Tyr529 lines the chloride pocket. Positions 560 to 619 constitute a CBS 1 domain; it reads MISPLVYIAKDSTVGDIKRALETKTRIRAFPLVENMESLALVGSVSRSQLQRYVDSQIGT. A coiled-coil region spans residues 625 to 657; that stretch reads EATRRIKQRLEDEESERKRREESKSDDTEDSLE. The span at 634–650 shows a compositional bias: basic and acidic residues; the sequence is LEDEESERKRREESKSD. The disordered stretch occupies residues 634-662; the sequence is LEDEESERKRREESKSDDTEDSLETTGAG. A phosphoserine; by gck-3 mark is found at Ser742 and Ser747. Residues 788-845 enclose the CBS 2 domain; that stretch reads IDSTPFQLSEYTSLFKAHSLFSLLGLNRAYVTKKGQLIGVVALKELRLAIEYLQSGKV.

The protein belongs to the chloride channel (TC 2.A.49) family. Isoform a interacts (via RFLI motif) with gck-3 (via C-terminus). Post-translationally, phosphorylated by gck-3; phosphorylation at both Ser-742 and Ser-747 is required to inhibit channel activity. Dephosphorylated by gsp-1/2 during cell swelling and oocyte meiotic maturation, which results in channel activation. In terms of tissue distribution, expressed in excretory cell, 4 anterior epithelial cells of the intestine, hermaphrodite-specific neurons and enteric muscles. Expressed also in vulva and uterus. Isoform a is expressed in oocytes (at protein level).

Its subcellular location is the cell membrane. Its function is as follows. Voltage-gated chloride channel. Insensitive to depolarizing conditioning voltages, requires low voltages for activation, insensitive to chloride levels and has a mild sensitivity to low pH. Channel gating properties are conferred by the cytoplasmic C-terminus. Plays a role in egg laying by modulating hermaphrodite-specific neurons (HSN) excitability and the ovulatory contractions of gap-junction-coupled gonadal sheath cells. When active, may prevent tubular formation of the excretory canals. Activated during oocyte meiotic maturation and by membrane hyperpolarization and cell swelling. Inhibited by Zn(2+) and to a lesser extent by Cd(2+). In terms of biological role, voltage-gated chloride channel. Sensitive to depolarizing conditioning voltages, requires stronger voltages for activation and activation is slower, is inhibited by low concentrations of chloride and is activated by low pH. Channel gating properties are conferred by the cytoplasmic C-terminus. The sequence is that of Chloride channel protein clh-3 from Caenorhabditis elegans.